A 325-amino-acid chain; its full sequence is Glutarate 2-hydroxylase (325 aa).

Residues H160, D162, and H292 each coordinate Fe cation.

The protein belongs to the glutarate hydroxylase family. In terms of assembly, homotetramer. Fe(2+) is required as a cofactor.

It carries out the reaction glutarate + 2-oxoglutarate + O2 = (S)-2-hydroxyglutarate + succinate + CO2. It participates in amino-acid degradation. Its function is as follows. Acts as an alpha-ketoglutarate-dependent dioxygenase catalyzing hydroxylation of glutarate (GA) to L-2-hydroxyglutarate (L2HG). Functions in a L-lysine degradation pathway that proceeds via cadaverine, glutarate and L-2-hydroxyglutarate. In Escherichia coli (strain UTI89 / UPEC), this protein is Glutarate 2-hydroxylase.